The following is a 204-amino-acid chain: Holliday junction branch migration complex subunit RuvA (204 aa).

The tract at residues 1 to 64 is domain I; the sequence is MIGKLKGTID…EDQLKLFGFM (64 aa). The interval 65–143 is domain II; sequence TALEREWFNL…AFAGEAINIG (79 aa). The tract at residues 144–151 is flexible linker; the sequence is LKQELGEG. The segment at 152 to 204 is domain III; that stretch reads VAAAPVADAVSALTNLGYSRDQAANAIAAAMKTAGEGADSAKLIRLGLKELAR.

Belongs to the RuvA family. Homotetramer. Forms an RuvA(8)-RuvB(12)-Holliday junction (HJ) complex. HJ DNA is sandwiched between 2 RuvA tetramers; dsDNA enters through RuvA and exits via RuvB. An RuvB hexamer assembles on each DNA strand where it exits the tetramer. Each RuvB hexamer is contacted by two RuvA subunits (via domain III) on 2 adjacent RuvB subunits; this complex drives branch migration. In the full resolvosome a probable DNA-RuvA(4)-RuvB(12)-RuvC(2) complex forms which resolves the HJ.

It localises to the cytoplasm. In terms of biological role, the RuvA-RuvB-RuvC complex processes Holliday junction (HJ) DNA during genetic recombination and DNA repair, while the RuvA-RuvB complex plays an important role in the rescue of blocked DNA replication forks via replication fork reversal (RFR). RuvA specifically binds to HJ cruciform DNA, conferring on it an open structure. The RuvB hexamer acts as an ATP-dependent pump, pulling dsDNA into and through the RuvAB complex. HJ branch migration allows RuvC to scan DNA until it finds its consensus sequence, where it cleaves and resolves the cruciform DNA. The polypeptide is Holliday junction branch migration complex subunit RuvA (Rhizobium johnstonii (strain DSM 114642 / LMG 32736 / 3841) (Rhizobium leguminosarum bv. viciae)).